The primary structure comprises 765 residues: Probable dehydratase PflD (765 aa).

A PFL domain is found at 3-637 (NRISRLKTAL…VVGATPDGRF (635 aa)). The region spanning 645-765 (GGLSPMLGQD…DIIRRTAHQL (121 aa)) is the Glycine radical domain. Glycine radical is present on Gly-741.

Belongs to the glycyl radical enzyme (GRE) family.

Probably shows dehydratase activity. This is Probable dehydratase PflD (pflD) from Escherichia coli (strain K12).